The chain runs to 387 residues: MRNWLLPEYIEDVLPAEAARVEQLRRSLLDLFKVHGYLYVIPPMMEYMESLTTGIGHDLDIATFKVVDQLTGKLMGIRADITPQTARIDAHMLNNQGVTRLCYAGSVLRTSPDGLARSREPLHVGAELYGHAGVESDIEIQRLMIKALHTVGLDTLYIDVSHVGIFASLLEHAGIGEAQEQELYAALQSKDQAAVRALGRGLNPDTLEALSSLTELSGDISVLEQAAKRLPQTEKIQQALRDLKAVGAGLDDLDVKVCFDLAELRGYHYHSGIVFAAYAQGYAGPLARGGRYDEVGAIFGRARPATGFSLDLRGVVSSLPVAETVGAIFAPAIADDALIFVVESLRAQGQVVIQDLPGQEPYRAELGCDRILVQQNGEWVVVAAPEL.

The protein belongs to the class-II aminoacyl-tRNA synthetase family. HisZ subfamily. Heteromultimer composed of HisG and HisZ subunits.

The protein localises to the cytoplasm. The protein operates within amino-acid biosynthesis; L-histidine biosynthesis; L-histidine from 5-phospho-alpha-D-ribose 1-diphosphate: step 1/9. In terms of biological role, required for the first step of histidine biosynthesis. May allow the feedback regulation of ATP phosphoribosyltransferase activity by histidine. The sequence is that of ATP phosphoribosyltransferase regulatory subunit from Methylobacillus flagellatus (strain ATCC 51484 / DSM 6875 / VKM B-1610 / KT).